We begin with the raw amino-acid sequence, 152 residues long: MSIKAVCVLVGSVKGTLNFKQDAIGSCTVTGEVSGLIPGKHGFHIHEYGDLTNGCTSSGGHFNPFKQIHGAPEDDIRHVGDLGNITADSSGVATVNITDRMISLTGEHSIIGRAVVVHAGEDDLGKGGHEDSKTTGHAGGRLSCGVIGINHL.

Serine 2 is modified (N-acetylserine). 3 residues coordinate Cu cation: histidine 44, histidine 46, and histidine 61. An intrachain disulfide couples cysteine 55 to cysteine 144. 4 residues coordinate Zn(2+): histidine 61, histidine 69, histidine 78, and aspartate 81. Histidine 118 serves as a coordination point for Cu cation.

The protein belongs to the Cu-Zn superoxide dismutase family. In terms of assembly, monomer. The cofactor is Cu cation. Requires Zn(2+) as cofactor.

It localises to the cytoplasm. It catalyses the reaction 2 superoxide + 2 H(+) = H2O2 + O2. With respect to regulation, inhibited by KCN and diethyldithiocarbamate. Functionally, destroys radicals which are normally produced within the cells and which are toxic to biological systems. The plasma superoxide dismutase has phagocytosis-stimulating activity and may play an important role in the biological defenses of the organism. This chain is Superoxide dismutase [Cu-Zn], found in Halocynthia roretzi (Sea squirt).